A 1116-amino-acid chain; its full sequence is uncharacterized protein (1116 aa).

The stretch at 21–32 is one BNR 1 repeat; sequence FISRDGGLTWRF. N-linked (GlcNAc...) asparagine glycosylation occurs at asparagine 35. BNR repeat units lie at residues 67–78 and 307–318; these read YYSLDQGRTWNE and YISHDGGQTIKR. The N-linked (GlcNAc...) asparagine glycan is linked to asparagine 336. Residues 404–415 form a BNR 4 repeat; the sequence is YLTKDGGETFTE. The N-linked (GlcNAc...) asparagine glycan is linked to asparagine 553. 3 BNR repeats span residues 607-618, 686-697, and 727-738; these read KITFNDGSDWNF, FLTTDGGETWTE, and SYSTDFGKTWKD. N-linked (GlcNAc...) asparagine glycosylation is present at asparagine 846. The helical transmembrane segment at 934 to 957 threads the bilayer; the sequence is INTGAYALVFVTILLVIFFAAWFV. Asparagine 985 carries N-linked (GlcNAc...) asparagine glycosylation. The disordered stretch occupies residues 1069 to 1116; the sequence is IEQEDAYRPEQEHTSQIDQPATSNIPDALPARSAIHKPDSTAVRNEDE. A compositionally biased stretch (basic and acidic residues) spans 1073–1083; the sequence is DAYRPEQEHTS. Positions 1084–1093 are enriched in polar residues; it reads QIDQPATSNI.

It localises to the membrane. This is an uncharacterized protein from Saccharomyces cerevisiae (strain ATCC 204508 / S288c) (Baker's yeast).